Here is a 65-residue protein sequence, read N- to C-terminus: Myotoxin-1 (65 aa).

A signal peptide spans Met-1–Ala-22. 3 disulfides stabilise this stretch: Cys-26-Cys-58, Cys-33-Cys-52, and Cys-40-Cys-59.

It belongs to the crotamine-myotoxin family. In terms of assembly, monomer. In terms of tissue distribution, expressed by the venom gland.

The protein resides in the secreted. Functionally, cationic peptide that possesses multiple functions. It acts as a cell-penetrating peptide (CPP), and as a potent voltage-gated potassium channel (Kv) inhibitor. It exhibits antimicrobial activities, hind limb paralysis, and severe muscle necrosis by a non-enzymatic mechanism. The sequence is that of Myotoxin-1 from Crotalus durissus terrificus (South American rattlesnake).